Reading from the N-terminus, the 168-residue chain is uncharacterized protein (168 aa).

One can recognise an HTH asnC-type domain in the interval 19–80; it reads LDKLDRHILN…VVSPKAVGRT (62 aa). A DNA-binding region (H-T-H motif) is located at residues 38–57; the sequence is LKELSEKVNSSVATCQRRVQ.

This is an uncharacterized protein from Haemophilus influenzae (strain ATCC 51907 / DSM 11121 / KW20 / Rd).